The sequence spans 123 residues: Transmembrane protein 049L (123 aa).

A run of 2 helical transmembrane segments spans residues 67–87 and 104–121; these read VFGA…LWLV and LSLQ…GVYN.

It is found in the membrane. The chain is Transmembrane protein 049L from Acheta domesticus (House cricket).